Reading from the N-terminus, the 353-residue chain is Paraneoplastic antigen Ma1 homolog (353 aa).

Belongs to the PNMA family. Testis and brain specific.

The protein resides in the nucleus. Its subcellular location is the nucleolus. This chain is Paraneoplastic antigen Ma1 homolog (Pnma1), found in Rattus norvegicus (Rat).